Reading from the N-terminus, the 251-residue chain is Ditrans,polycis-undecaprenyl-diphosphate synthase ((2E,6E)-farnesyl-diphosphate specific) (251 aa).

Residue Asp21 is part of the active site. Asp21 contributes to the Mg(2+) binding site. Residues 22 to 25 (GNNR), Trp26, His38, and 66 to 68 (SSE) contribute to the substrate site. Residue Asn69 is the Proton acceptor of the active site. Residues Trp70, Arg72, Arg189, and 195-197 (RIS) each bind substrate. Glu208 contacts Mg(2+).

Belongs to the UPP synthase family. Homodimer. The cofactor is Mg(2+).

It catalyses the reaction 8 isopentenyl diphosphate + (2E,6E)-farnesyl diphosphate = di-trans,octa-cis-undecaprenyl diphosphate + 8 diphosphate. In terms of biological role, catalyzes the sequential condensation of isopentenyl diphosphate (IPP) with (2E,6E)-farnesyl diphosphate (E,E-FPP) to yield (2Z,6Z,10Z,14Z,18Z,22Z,26Z,30Z,34E,38E)-undecaprenyl diphosphate (di-trans,octa-cis-UPP). UPP is the precursor of glycosyl carrier lipid in the biosynthesis of bacterial cell wall polysaccharide components such as peptidoglycan and lipopolysaccharide. The protein is Ditrans,polycis-undecaprenyl-diphosphate synthase ((2E,6E)-farnesyl-diphosphate specific) of Pseudomonas putida (strain ATCC 47054 / DSM 6125 / CFBP 8728 / NCIMB 11950 / KT2440).